Consider the following 241-residue polypeptide: Probable xyloglucan-specific endo-beta-1,4-glucanase A (241 aa).

An N-terminal signal peptide occupies residues 1–18; sequence MKFNLALALSLTVATAEA.

This sequence belongs to the glycosyl hydrolase 12 (cellulase H) family.

Its subcellular location is the secreted. It carries out the reaction xyloglucan + H2O = xyloglucan oligosaccharides.. Functionally, catalyzes endohydrolysis of 1,4-beta-D-glucosidic linkages in xyloglucan with retention of the beta-configuration of the glycosyl residues. Specific for xyloglucan and does not hydrolyze other cell wall components. This Aspergillus clavatus (strain ATCC 1007 / CBS 513.65 / DSM 816 / NCTC 3887 / NRRL 1 / QM 1276 / 107) protein is Probable xyloglucan-specific endo-beta-1,4-glucanase A (xgeA).